We begin with the raw amino-acid sequence, 286 residues long: Polyamine aminopropyltransferase (286 aa).

Residues 2–237 form the PABS domain; that stretch reads DLWFSEVHTP…GYWLFGFASK (236 aa). Residue Gln-31 coordinates S-methyl-5'-thioadenosine. Position 86 (Asp-86) interacts with spermidine. S-methyl-5'-thioadenosine-binding positions include Glu-106 and 137-138; that span reads NG. The active-site Proton acceptor is Asp-155.

It belongs to the spermidine/spermine synthase family. In terms of assembly, homodimer or homotetramer.

The protein localises to the cytoplasm. The catalysed reaction is S-adenosyl 3-(methylsulfanyl)propylamine + putrescine = S-methyl-5'-thioadenosine + spermidine + H(+). The protein operates within amine and polyamine biosynthesis; spermidine biosynthesis; spermidine from putrescine: step 1/1. Catalyzes the irreversible transfer of a propylamine group from the amino donor S-adenosylmethioninamine (decarboxy-AdoMet) to putrescine (1,4-diaminobutane) to yield spermidine. The chain is Polyamine aminopropyltransferase from Streptococcus pneumoniae serotype 4 (strain ATCC BAA-334 / TIGR4).